The primary structure comprises 279 residues: Thymidylate synthase (279 aa).

133 to 134 lines the dUMP pocket; the sequence is RR. The Nucleophile role is filled by Cys-154. DUMP contacts are provided by residues 178-181, Asn-189, and 219-221; these read RSND and HIY. (6R)-5,10-methylene-5,6,7,8-tetrahydrofolate is bound at residue Asp-181. Ala-278 provides a ligand contact to (6R)-5,10-methylene-5,6,7,8-tetrahydrofolate.

This sequence belongs to the thymidylate synthase family. Bacterial-type ThyA subfamily. As to quaternary structure, homodimer.

It is found in the cytoplasm. The enzyme catalyses dUMP + (6R)-5,10-methylene-5,6,7,8-tetrahydrofolate = 7,8-dihydrofolate + dTMP. It participates in pyrimidine metabolism; dTTP biosynthesis. Catalyzes the reductive methylation of 2'-deoxyuridine-5'-monophosphate (dUMP) to 2'-deoxythymidine-5'-monophosphate (dTMP) while utilizing 5,10-methylenetetrahydrofolate (mTHF) as the methyl donor and reductant in the reaction, yielding dihydrofolate (DHF) as a by-product. This enzymatic reaction provides an intracellular de novo source of dTMP, an essential precursor for DNA biosynthesis. This chain is Thymidylate synthase, found in Streptococcus pneumoniae (strain ATCC 700669 / Spain 23F-1).